Here is a 300-residue protein sequence, read N- to C-terminus: Type II methyltransferase M.Cfr9I (300 aa).

Positions 109-129 (RGYRAPDKKNPARAMAVRPDT) are disordered.

This sequence belongs to the N(4)/N(6)-methyltransferase family. N(4) subfamily.

The enzyme catalyses a 2'-deoxycytidine in DNA + S-adenosyl-L-methionine = an N(4)-methyl-2'-deoxycytidine in DNA + S-adenosyl-L-homocysteine + H(+). In terms of biological role, a beta subtype methylase, recognizes the double-stranded sequence 5'-CCCGGG-3', methylates C-2 on both strands, and protects the DNA from cleavage by the Cfr9I endonuclease. The chain is Type II methyltransferase M.Cfr9I from Citrobacter freundii.